We begin with the raw amino-acid sequence, 234 residues long: Sugar fermentation stimulation protein homolog (234 aa).

This sequence belongs to the SfsA family.

In Shewanella piezotolerans (strain WP3 / JCM 13877), this protein is Sugar fermentation stimulation protein homolog.